Consider the following 710-residue polypeptide: Polyribonucleotide nucleotidyltransferase (710 aa).

Mg(2+) contacts are provided by Asp-501 and Asp-507. The 61-residue stretch at 568–628 (PKVQMFQIKP…ETVKQAILFI (61 aa)) folds into the KH domain. Positions 638 to 710 (NSIYHAHISR…RIDFVLISKK (73 aa)) constitute an S1 motif domain.

It belongs to the polyribonucleotide nucleotidyltransferase family. Mg(2+) serves as cofactor.

Its subcellular location is the cytoplasm. The enzyme catalyses RNA(n+1) + phosphate = RNA(n) + a ribonucleoside 5'-diphosphate. Involved in mRNA degradation. Catalyzes the phosphorolysis of single-stranded polyribonucleotides processively in the 3'- to 5'-direction. In Phytoplasma australiense, this protein is Polyribonucleotide nucleotidyltransferase.